Consider the following 361-residue polypeptide: tRNA 2-selenouridine synthase (361 aa).

One can recognise a Rhodanese domain in the interval 14–137 (LIADTPIIDV…LRQTAIQATI (124 aa)). Catalysis depends on Cys-97, which acts as the S-selanylcysteine intermediate.

Belongs to the SelU family. Monomer.

The catalysed reaction is 5-methylaminomethyl-2-thiouridine(34) in tRNA + selenophosphate + (2E)-geranyl diphosphate + H2O + H(+) = 5-methylaminomethyl-2-selenouridine(34) in tRNA + (2E)-thiogeraniol + phosphate + diphosphate. It carries out the reaction 5-methylaminomethyl-2-thiouridine(34) in tRNA + (2E)-geranyl diphosphate = 5-methylaminomethyl-S-(2E)-geranyl-thiouridine(34) in tRNA + diphosphate. It catalyses the reaction 5-methylaminomethyl-S-(2E)-geranyl-thiouridine(34) in tRNA + selenophosphate + H(+) = 5-methylaminomethyl-2-(Se-phospho)selenouridine(34) in tRNA + (2E)-thiogeraniol. The enzyme catalyses 5-methylaminomethyl-2-(Se-phospho)selenouridine(34) in tRNA + H2O = 5-methylaminomethyl-2-selenouridine(34) in tRNA + phosphate. Functionally, involved in the post-transcriptional modification of the uridine at the wobble position (U34) of tRNA(Lys), tRNA(Glu) and tRNA(Gln). Catalyzes the conversion of 2-thiouridine (S2U-RNA) to 2-selenouridine (Se2U-RNA). Acts in a two-step process involving geranylation of 2-thiouridine (S2U) to S-geranyl-2-thiouridine (geS2U) and subsequent selenation of the latter derivative to 2-selenouridine (Se2U) in the tRNA chain. This Escherichia coli O6:H1 (strain CFT073 / ATCC 700928 / UPEC) protein is tRNA 2-selenouridine synthase.